Here is a 427-residue protein sequence, read N- to C-terminus: Acyltransferase fer5 (427 aa).

The segment at 1 to 24 (MTAATSVQPSPAPRQPGLRATFNP) is disordered. Position 342 (H342) interacts with substrate. Catalysis depends on E380, which acts as the Proton acceptor.

Belongs to the lysine N-acyltransferase mbtK family.

It functions in the pathway siderophore biosynthesis. Acyltransferase; part of the gene cluster that mediates the biosynthesis of siderophore ferrichrome A which is contributing to organismal virulence. The first step of ferrichrome A biosynthesis is performed by the HMG-CoA synthase hcs1 which catalyzes the generation of HMG-CoA and CoA using acetoacetyl-CoA and acetyl-CoA as substrates. The enoyl-CoA isomerase/hydratase fer4 then catalyzes the conversion of hcs1-produced HMG-CoA to methylglutaconyl-CoA. The acyltransferase fer5 then fuses the fer4-generated methylglutaconyl-CoA with sid1-generated hydroxyornithine to yield methylglutaconyl hydroxyornithine. Methylglutaconyl hydroxyornithine is then available for use by the NRPS fer3 to generate ferrichrome A. The sequence is that of Acyltransferase fer5 from Mycosarcoma maydis (Corn smut fungus).